The sequence spans 784 residues: Phosphate transporter PHO1 homolog 1 (784 aa).

Over 1 to 387 (MVKFTKQFEG…HHRKESHSVT (387 aa)) the chain is Cytoplasmic. Residues 2–335 (VKFTKQFEGQ…GKQILPIYLK (334 aa)) form the SPX domain. The helical transmembrane segment at 388–408 (FFIGLFTGCFVALLAGYIIVA) threads the bilayer. Over 409-429 (HLTGMYRQHSANTFYMETAYP) the chain is Extracellular. A helical transmembrane segment spans residues 430–450 (VLSMFGLLFLHLFLYGCNIFM). Residues 451–474 (WRKARINYSFIFELGSKNELKYRD) lie on the Cytoplasmic side of the membrane. A helical membrane pass occupies residues 475–495 (VFLICTASMSAIAGVMFVHLS). Over 496–507 (LLEKGYSFRQVQ) the chain is Extracellular. Residues 508-528 (VIPGLLLLGFLLILICPLNIF) traverse the membrane as a helical segment. At 529-654 (YKSSRYRLIS…TKVAYEKERS (126 aa)) the chain is on the cytoplasmic side. In terms of domain architecture, EXS spans 593–784 (MRVKYYRDLA…LPFREVDEED (192 aa)). A helical membrane pass occupies residues 655 to 675 (LGWLCLVVAMSSVATIYQLYW). At 676 to 703 (DFVKDWGLLQHNSNNPWLRNQLMLRQKS) the chain is on the extracellular side. A helical transmembrane segment spans residues 704–724 (IYYFSMVLNLVLRLAWLQTVL). The Cytoplasmic segment spans residues 725–784 (HSSFEHVDYRVTGLFLAALEVIRRGQWNFYRLENEHLNNAGKFRAVKTVPLPFREVDEED).

It belongs to the SYG1 (TC 2.A.94) family. As to expression, expressed in vascular cylinder of roots, leaves, stems, petals, sepals and filaments. Expressed in receptacle, stigma apex and anther connective tissue.

Its subcellular location is the cell membrane. Contributes to the loading of inorganic phosphate (Pi) into the root xylem vessels. This is Phosphate transporter PHO1 homolog 1 (PHO1-H1) from Arabidopsis thaliana (Mouse-ear cress).